Consider the following 414-residue polypeptide: Peptidoglycan beta-N-acetylmuramidase NamZ (414 aa).

Residues 1–23 form the signal peptide; that stretch reads MRKTIFAFLTGLMMFGTITAASA.

This sequence belongs to the glycoside hydrolase 171 family. As to quaternary structure, homodimer in solution.

Its subcellular location is the secreted. It catalyses the reaction Hydrolysis of terminal, non-reducing N-acetylmuramic residues.. In terms of biological role, catalyzes the exo-lytic cleavage of beta-1,4-N-acetylmuramate (beta-1,4-MurNAc) from the non-reducing ends of peptidoglycan chains. Specifically hydrolyzes the natural, peptidoglycan-derived disaccharide MurNAc-GlcNAc and the artificial substrate para-nitrophenyl beta-N-acetylmuramic acid (pNP-MurNAc). Requires a MurNAc entity at the non-reducing end, and cannot cleave GlcNAc-MurNAc. Probably plays a role in cell wall turnover and recycling. This Bacillus subtilis (strain 168) protein is Peptidoglycan beta-N-acetylmuramidase NamZ.